Consider the following 101-residue polypeptide: Integration host factor subunit beta (101 aa).

The tract at residues 57 to 101 is disordered; the sequence is PARAGRNPRTGAHVPVDQKSVPFFKTGKEMRERLNRDHPDPGAAD. Basic and acidic residues predominate over residues 82 to 101; sequence TGKEMRERLNRDHPDPGAAD.

It belongs to the bacterial histone-like protein family. As to quaternary structure, heterodimer of an alpha and a beta chain.

This protein is one of the two subunits of integration host factor, a specific DNA-binding protein that functions in genetic recombination as well as in transcriptional and translational control. The chain is Integration host factor subunit beta from Bradyrhizobium diazoefficiens (strain JCM 10833 / BCRC 13528 / IAM 13628 / NBRC 14792 / USDA 110).